We begin with the raw amino-acid sequence, 569 residues long: Vacuolar protein sorting-associated protein 53 B (569 aa).

3 coiled-coil regions span residues 53 to 90 (TRAK…VQDI), 125 to 145 (QVMT…AINE), and 295 to 316 (KEKS…FERE).

This sequence belongs to the VPS53 family. In terms of assembly, component of the Golgi-associated retrograde protein (GARP) complex.

The protein resides in the cytoplasm. It localises to the golgi apparatus. It is found in the trans-Golgi network membrane. Its subcellular location is the endosome membrane. Its function is as follows. Involved in retrograde transport from early and late endosomes to late Golgi, leading to the membrane fusion between late Golgi and endosomal vesicles. The sequence is that of Vacuolar protein sorting-associated protein 53 B from Arabidopsis thaliana (Mouse-ear cress).